Consider the following 178-residue polypeptide: Transcription termination/antitermination protein NusG (178 aa).

In terms of domain architecture, KOW spans 130–159 (SVKVKEGPFANFIGTIEEIQLDKRKLKVHV).

The protein belongs to the NusG family.

Participates in transcription elongation, termination and antitermination. The chain is Transcription termination/antitermination protein NusG from Halalkalibacterium halodurans (strain ATCC BAA-125 / DSM 18197 / FERM 7344 / JCM 9153 / C-125) (Bacillus halodurans).